The following is a 255-amino-acid chain: 1-(5-phosphoribosyl)-5-[(5-phosphoribosylamino)methylideneamino] imidazole-4-carboxamide isomerase (255 aa).

The active-site Proton acceptor is the Asp-8. Asp-129 functions as the Proton donor in the catalytic mechanism.

It belongs to the HisA/HisF family.

It localises to the cytoplasm. It catalyses the reaction 1-(5-phospho-beta-D-ribosyl)-5-[(5-phospho-beta-D-ribosylamino)methylideneamino]imidazole-4-carboxamide = 5-[(5-phospho-1-deoxy-D-ribulos-1-ylimino)methylamino]-1-(5-phospho-beta-D-ribosyl)imidazole-4-carboxamide. It functions in the pathway amino-acid biosynthesis; L-histidine biosynthesis; L-histidine from 5-phospho-alpha-D-ribose 1-diphosphate: step 4/9. In Synechococcus sp. (strain CC9902), this protein is 1-(5-phosphoribosyl)-5-[(5-phosphoribosylamino)methylideneamino] imidazole-4-carboxamide isomerase.